The primary structure comprises 500 residues: E3 ubiquitin-protein ligase TRIM4 (500 aa).

Residues 12-53 (CPICLDYFQDPVSIECGHNFCRGCLHRNWAPGGGPFPCPECR) form an RING-type zinc finger. The segment at 82 to 123 (VPPGLCGRHWEPLRLFCEDDQRPVCLVCRESQEHQTHAMAPI) adopts a B box-type zinc-finger fold. Zn(2+) contacts are provided by C87, H90, C109, and H115. The stretch at 212 to 253 (EEEDLFLQRLNKEEEETKKKLNENTLKLNQTIASLKKLILEV) forms a coiled coil. Residues 288-500 (KVKTVCQIPL…LVIPPVTDRK (213 aa)) enclose the B30.2/SPRY domain.

This sequence belongs to the TRIM/RBCC family. As to quaternary structure, homotrimer.

The protein resides in the cytoplasm. It carries out the reaction S-ubiquitinyl-[E2 ubiquitin-conjugating enzyme]-L-cysteine + [acceptor protein]-L-lysine = [E2 ubiquitin-conjugating enzyme]-L-cysteine + N(6)-ubiquitinyl-[acceptor protein]-L-lysine.. It participates in protein modification; protein ubiquitination. E3 ubiquitin-protein ligase. Mediates 'Lys-63'-linked polyubiquitination of the innate immune receptor RIGI, this linkage doesn't lead to proteasomal degradation but seems to enhance IFN induction. This is E3 ubiquitin-protein ligase TRIM4 (TRIM4) from Homo sapiens (Human).